The sequence spans 42 residues: Photosystem II reaction center protein J (42 aa).

The chain crosses the membrane as a helical span at residues 12–32; it reads LWFVGMIVGLAALGLLGIFFY.

It belongs to the PsbJ family. In terms of assembly, PSII is composed of 1 copy each of membrane proteins PsbA, PsbB, PsbC, PsbD, PsbE, PsbF, PsbH, PsbI, PsbJ, PsbK, PsbL, PsbM, PsbT, PsbX, PsbY, PsbZ, Psb30/Ycf12, at least 3 peripheral proteins of the oxygen-evolving complex and a large number of cofactors. It forms dimeric complexes.

It localises to the plastid. The protein resides in the chloroplast thylakoid membrane. One of the components of the core complex of photosystem II (PSII). PSII is a light-driven water:plastoquinone oxidoreductase that uses light energy to abstract electrons from H(2)O, generating O(2) and a proton gradient subsequently used for ATP formation. It consists of a core antenna complex that captures photons, and an electron transfer chain that converts photonic excitation into a charge separation. The polypeptide is Photosystem II reaction center protein J (Nephroselmis olivacea (Green alga)).